Here is a 366-residue protein sequence, read N- to C-terminus: Putative amino-acid transporter MJ1196 (366 aa).

Helical transmembrane passes span 14–34 (ITSI…LLFG), 37–57 (IIWG…PFAY), 87–107 (ILWL…EIVF), 111–131 (FNVS…ILGG), 141–161 (IFGI…GIKI), 173–193 (ILTI…TMPL), 205–225 (GLLV…LTIV), 247–267 (FLLA…LFTL), 291–311 (IPYY…IFDA), 314–334 (LVDM…LAVF), and 346–366 (LISM…FIIL).

Belongs to the amino acid-polyamine-organocation (APC) superfamily.

It is found in the cell membrane. The polypeptide is Putative amino-acid transporter MJ1196 (Methanocaldococcus jannaschii (strain ATCC 43067 / DSM 2661 / JAL-1 / JCM 10045 / NBRC 100440) (Methanococcus jannaschii)).